Consider the following 269-residue polypeptide: Hemin import ATP-binding protein HmuV (269 aa).

Residues I5–C242 form the ABC transporter domain. G37–S44 contributes to the ATP binding site.

The protein belongs to the ABC transporter superfamily. Heme (hemin) importer (TC 3.A.1.14.5) family. As to quaternary structure, the complex is composed of two ATP-binding proteins (HmuV), two transmembrane proteins (HmuU) and a solute-binding protein (HmuT).

It localises to the cell inner membrane. Its function is as follows. Part of the ABC transporter complex HmuTUV involved in hemin import. Responsible for energy coupling to the transport system. This Nitrobacter winogradskyi (strain ATCC 25391 / DSM 10237 / CIP 104748 / NCIMB 11846 / Nb-255) protein is Hemin import ATP-binding protein HmuV.